Reading from the N-terminus, the 1464-residue chain is MSNSLGNNLLYQGFLTSTVLEHKSRISPPCVGGNSLFQQQVISKSPLSTEFRGNRLKVQKKKIPMEKKRAFSSSPHAVLTTDTSSELAEKFSLGGNIELQVDVRPPTSGDVSFVDFQVTNGSDKLFLHWGAVKFGKETWSLPNDRPDGTKVYKNKALRTPFVKSGSNSILRLEIRDTAIEAIEFLIYDEAHDKWIKNNGGNFRVKLSRKEIRGPDVSVPEELVQIQSYLRWERKGKQNYPPEKEKEEYEAARTVLQEEIARGASIQDIRARLTKTNDKSQSKEEPLHVTKSDIPDDLAQAQAYIRWEKAGKPNYPPEKQIEELEEARRELQLELEKGITLDELRKTITKGEIKTKVEKHLKRSSFAVERIQRKKRDFGHLINKYTSSPAVQVQKVLEEPPALSKIKLYAKEKEEQIDDPILNKKIFKVDDGELLVLVAKSSGKTKVHLATDLNQPITLHWALSKSPGEWMVPPSSILPPGSIILDKAAETPFSASSSDGLTSKVQSLDIVIEDGNFVGMPFVLLSGEKWIKNQGSDFYVGFSAASKLALKAAGDGSGTAKSLLDKIADMESEAQKSFMHRFNIAADLIEDATSAGELGFAGILVWMRFMATRQLIWNKNYNVKPREISKAQDRLTDLLQNAFTSHPQYREILRMIMSTVGRGGEGDVGQRIRDEILVIQRNNDCKGGMMQEWHQKLHNNTSPDDVVICQALIDYIKSDFDLGVYWKTLNENGITKERLLSYDRAIHSEPNFRGDQKGGLLRDLGHYMRTLKAVHSGADLESAIANCMGYKTEGEGFMVGVQINPVSGLPSGFQDLLHFVLDHVEDKNVETLLERLLEAREELRPLLLKPNNRLKDLLFLDIALDSTVRTAVERGYEELNNANPEKIMYFISLVLENLALSVDDNEDLVYCLKGWNQALSMSNGGDNHWALFAKAVLDRTRLALASKAEWYHHLLQPSAEYLGSILGVDQWALNIFTEEIIRAGSAASLSSLLNRLDPVLRKTANLGSWQIISPVEAVGYVVVVDELLSVQNEIYEKPTILVAKSVKGEEEIPDGAVALITPDMPDVLSHVSVRARNGKVCFATCFDPNILADLQAKEGRILLLKPTPSDIIYSEVNEIELQSSSNLVEAETSATLRLVKKQFGGCYAISADEFTSEMVGAKSRNIAYLKGKVPSSVGIPTSVALPFGVFEKVLSDDINQGVAKELQILMKKLSEGDFSALGEIRTTVLDLSAPAQLVKELKEKMQGSGMPWPGDEGPKRWEQAWMAIKKVWASKWNERAYFSTRKVKLDHDYLCMAVLVQEIINADYAFVIHTTNPSSGDDSEIYAEVVRGLGETLVGAYPGRALSFICKKKDLNSPQVLGYPSKPIGLFIKRSIIFRSDSNGEDLEGYAGAGLYDSVPMDEEEKVVIDYSSDPLITDGNFRQTILSNIARAGHAIEELYGSPQDIEGVVRDGKIYVVQTRPQM.

The N-terminal 77 residues, 1-77 (MSNSLGNNLL…KRAFSSSPHA (77 aa)), are a transit peptide targeting the chloroplast. The Tele-phosphohistidine intermediate role is filled by His1069.

This sequence belongs to the PEP-utilizing enzyme family. Homodimer. Mg(2+) is required as a cofactor. As to expression, expressed in leaves.

It is found in the plastid. The protein resides in the chloroplast. It catalyses the reaction [(1-&gt;4)-alpha-D-glucosyl](n) + n ATP + n H2O = [(1-&gt;4)-6-phospho-alpha-D-glucosyl](n) + n AMP + n phosphate + 2n H(+). It carries out the reaction ATP + protein L-histidine = ADP + protein N-phospho-L-histidine.. Its function is as follows. Mediates the incorporation of phosphate into starch-like alpha-glucan, mostly at the C-6 position of glucose units. Acts as an overall regulator of starch mobilization. Required for starch degradation, suggesting that the phosphate content of starch regulates its degradability. More active on alpha-1,6 branched amylopectin. The chain is Alpha-glucan water dikinase, chloroplastic (R1) from Solanum tuberosum (Potato).